We begin with the raw amino-acid sequence, 429 residues long: Histidine--tRNA ligase (429 aa).

It belongs to the class-II aminoacyl-tRNA synthetase family. Homodimer.

It localises to the cytoplasm. It catalyses the reaction tRNA(His) + L-histidine + ATP = L-histidyl-tRNA(His) + AMP + diphosphate + H(+). This Streptococcus pneumoniae (strain CGSP14) protein is Histidine--tRNA ligase.